We begin with the raw amino-acid sequence, 689 residues long: UvrABC system protein C (689 aa).

Residues 1–19 (MTSDSSDTAKQIGSGQPSG) show a composition bias toward polar residues. The tract at residues 1 to 59 (MTSDSSDTAKQIGSGQPSGSPADMRRRDGVAPEQEVDPASLETDEDDEARLPDLPDEPV) is disordered. The span at 42 to 59 (ETDEDDEARLPDLPDEPV) shows a compositional bias: acidic residues. The region spanning 83 to 161 (TSPGVYRMMN…IKQLRPRFNV (79 aa)) is the GIY-YIG domain. The UVR domain occupies 271 to 306 (RAVKEDLARAMEQAAADLAFERAALYRDRLAALSAI).

This sequence belongs to the UvrC family. As to quaternary structure, interacts with UvrB in an incision complex.

Its subcellular location is the cytoplasm. The UvrABC repair system catalyzes the recognition and processing of DNA lesions. UvrC both incises the 5' and 3' sides of the lesion. The N-terminal half is responsible for the 3' incision and the C-terminal half is responsible for the 5' incision. The chain is UvrABC system protein C from Nitrobacter winogradskyi (strain ATCC 25391 / DSM 10237 / CIP 104748 / NCIMB 11846 / Nb-255).